Reading from the N-terminus, the 224-residue chain is DNA repair and recombination protein RadB (224 aa).

The protein belongs to the eukaryotic RecA-like protein family. RadB subfamily.

In terms of biological role, involved in DNA repair and in homologous recombination. May regulate the cleavage reactions of the branch-structured DNA. Has a very weak ATPase activity that is not stimulated by DNA. Binds DNA but does not promote DNA strands exchange. In Methanoculleus marisnigri (strain ATCC 35101 / DSM 1498 / JR1), this protein is DNA repair and recombination protein RadB.